The primary structure comprises 329 residues: DNA-directed RNA polymerase subunit alpha (329 aa).

The tract at residues 1-235 (MQGSVTEFLK…EQLDAFVDLR (235 aa)) is alpha N-terminal domain (alpha-NTD). The segment at 249–329 (FDPILLRPVD…NWPPASIAED (81 aa)) is alpha C-terminal domain (alpha-CTD).

This sequence belongs to the RNA polymerase alpha chain family. Homodimer. The RNAP catalytic core consists of 2 alpha, 1 beta, 1 beta' and 1 omega subunit. When a sigma factor is associated with the core the holoenzyme is formed, which can initiate transcription.

It carries out the reaction RNA(n) + a ribonucleoside 5'-triphosphate = RNA(n+1) + diphosphate. Its function is as follows. DNA-dependent RNA polymerase catalyzes the transcription of DNA into RNA using the four ribonucleoside triphosphates as substrates. The sequence is that of DNA-directed RNA polymerase subunit alpha from Pasteurella multocida (strain Pm70).